We begin with the raw amino-acid sequence, 211 residues long: Large ribosomal subunit protein uL3 (211 aa).

An N5-methylglutamine modification is found at glutamine 150.

Belongs to the universal ribosomal protein uL3 family. Part of the 50S ribosomal subunit. Forms a cluster with proteins L14 and L19. Methylated by PrmB.

In terms of biological role, one of the primary rRNA binding proteins, it binds directly near the 3'-end of the 23S rRNA, where it nucleates assembly of the 50S subunit. This Pseudomonas savastanoi pv. phaseolicola (strain 1448A / Race 6) (Pseudomonas syringae pv. phaseolicola (strain 1448A / Race 6)) protein is Large ribosomal subunit protein uL3.